The chain runs to 185 residues: Sarcoplasmic calcium-binding proteins II, V, VI, and VII (185 aa).

EF-hand domains follow at residues 5 to 41 (FQKQ…YKEV), 57 to 92 (SLED…TIAT), 102 to 137 (WCQN…FQLQ), and 138 to 173 (CADV…TSPA). The Ca(2+) site is built by aspartate 19, asparagine 21, aspartate 23, serine 25, aspartate 30, aspartate 70, asparagine 72, aspartate 74, glutamate 81, aspartate 115, serine 117, aspartate 119, and glutamate 126.

Like parvalbumins, SCPs seem to be more abundant in fast contracting muscles, but no functional relationship can be established from this distribution. This chain is Sarcoplasmic calcium-binding proteins II, V, VI, and VII, found in Branchiostoma lanceolatum (Common lancelet).